Here is a 94-residue protein sequence, read N- to C-terminus: Integration host factor subunit beta (94 aa).

This sequence belongs to the bacterial histone-like protein family. As to quaternary structure, heterodimer of an alpha and a beta chain.

Functionally, this protein is one of the two subunits of integration host factor, a specific DNA-binding protein that functions in genetic recombination as well as in transcriptional and translational control. The polypeptide is Integration host factor subunit beta (Actinobacillus succinogenes (strain ATCC 55618 / DSM 22257 / CCUG 43843 / 130Z)).